A 93-amino-acid chain; its full sequence is Sm-like protein LSM2 (93 aa).

Positions 2–76 (LFFSYFKDLV…VRYVQLPKDG (75 aa)) constitute a Sm domain.

This sequence belongs to the snRNP Sm proteins family. In terms of assembly, component of the heptameric LSM1-LSM7 complex that forms a seven-membered ring structure with a donut shape. The LSM subunits are arranged in the order LSM1, LSM2, LSM3, LSM6, LSM5, LSM7 and LSM4. LSM2 subunit interacts only with its two neighboring subunits, LSM1A or LSM1B and LSM3A or LSM3B. Component of the heptameric LSM2-LSM8 complex that forms a seven-membered ring structure with a donut shape. The LSM subunits are arranged in the order LSM8, LSM2, LSM3, LSM6, LSM5, LSM7 and LSM4. LSM2 subunit interacts only with its two neighboring subunits, LSM8 and LSM3A or LSM3B. In terms of tissue distribution, expressed in roots, leaves, stems, flowers and siliques.

Its subcellular location is the cytoplasm. It is found in the nucleus. Component of LSM protein complexes, which are involved in RNA processing. Component of the cytoplasmic LSM1-LSM7 complex which is involved in mRNA degradation by promoting decapping and leading to accurate 5'-3' mRNA decay. The cytoplasmic LSM1-LSM7 complex regulates developmental gene expression by the decapping of specific development-related transcripts. Component of the nuclear LSM2-LSM8 complex which is involved splicing nuclear mRNAs. LSM2-LSM8 binds directly to the U6 small nuclear RNAs (snRNAs) and is essential for accurate splicing of selected development-related mRNAs through the stabilization of the spliceosomal U6 snRNA. Plays a critical role in the regulation of development-related gene expression. The sequence is that of Sm-like protein LSM2 from Arabidopsis thaliana (Mouse-ear cress).